A 176-amino-acid polypeptide reads, in one-letter code: Inner membrane-spanning protein YciB (176 aa).

The next 5 membrane-spanning stretches (helical) occupy residues 3-23 (FLFD…WGIF), 49-69 (TMLW…LVLH), 72-92 (KFIQ…LVAA), 118-138 (KLNL…LYVV), and 149-169 (FKLF…SLWL).

It belongs to the YciB family.

It is found in the cell inner membrane. Its function is as follows. Plays a role in cell envelope biogenesis, maintenance of cell envelope integrity and membrane homeostasis. This Burkholderia mallei (strain NCTC 10247) protein is Inner membrane-spanning protein YciB.